Here is a 1870-residue protein sequence, read N- to C-terminus: MTPSASPSPSPNPGDANVKVDADSPNDFILFSHELPSGDIQDLIRRLHRYGTLPGYPHLARFLQECALLLRTEIQKLPRALRDSVPPFHDVVTLASHWDRLKSGPLSGAWDGPFLCLYEIAMLIGHHETHQLSYRRPACLVGISVGLFSAAAVAVSKSISDLVSYGAESVRTAFAFCVHVQRVSQELEPTMTEQAASVSWATVVIGVPADTIQVELDRFNHLKESESPGANARPLTGVSISHVDQTSVGVTGPPSRLKQLFRQSELLRSSRHSALPISGGLCHVPNVYDDEDVRAILEMAEVWEKWGTRALQVPLISPFTGSPFLCPDAYHLIEAICTEALTKQLYFDKLAGGVVTQLNGLSCQVLHYGASLMSDTIIDDVTSQLSPCDTARQCLVDWALRDAFDQLPGGPTPPRDAKLAVVGMACRMPGGADTPDHFWELLMNGVDTHTTVPPDRFDLDAHFDPSGEKENTTTKGSQSNRPLSRQAEQTDPMQRLALVTAYEALEMAGFVPNRTPSSHLSRVGTYYGQASDDYREVNAGQKIGTYGIPGTERGFGNGRINYFFNFQGPSFNIDTACSSGLAAVQAACSALWAGEADTVVAGGLNVITSPDIYCMLSKGHFLSKTGQCKVWDIGADGYCRADGIGSVVIKRLDDALADNDVILACISAGATNHSAESISITQPHAAAQRENYRQVMDRAGVSPLDVSFVELHGTGTQVGDAVESESVLSFFAPLGRRSHPDKRLHLGAVKSNIGHGEAAAGIASLIKVLLMYRNNTIPRHIGIRTAMNPVVAQHLANRNAGILSENHPWLAATASKKRYAIVNSFGAHGGNTTLLLEDAPSQHSQRYKNHSRRVVASSEVVCTSAKSKASLRANIRALLAYLDTHQETDLRDLAYTTSARRMHHHIRIASSVTSTAQLRSFLQAAADDVDAYAKHIATATKRTAVFAFSGQGCLYHGAAAHLFEQAPLFRNQVLQLDRIVRRLGFPSILVTVAGDAASVYDSARCPHRESTPSSDASHDSNTNRTSTAPAVDSPLIAQLALVVIQIALVQYWGLLGIKPSVVIGHSLGEYAALVAASVLSVADALFLVGKRAELMLAVCEPGSHAMLSVRGASVDRIEELCRESEKRYPFEVSCVNGLTDLVVTGLRGDMASLRDLLQGSGLKCVLLDIPFAFHSKQMSPILEDFENAAQQITFQEPAVPVISPLLGKCISEANVINGKYLARATREPVDFVAALDSAWADGTVNDKSIWIDIGPHPVCTSFASNHYGKAATQSFASLRRGDETLSTLTATLAALHCLGLPVDWNEYYDLRENPARLLHLDSYQWNYKNYWIPYEGSWTLDKAHAGQNNKTKDDNSAVTPAFFTSSVQQIIFEEYDESMGRMEALSDLHHPDLQGAADGHKIHGRSVVTGSIWADITLTVGEYLYKQMVPGGKMPHMNVKGMEVLEAQVLHPDMSQFIQIEGVLDLPRQQTAVRLYAASANGTRNTDKPFASATVCYEEAQDWQDQWQMTSHLVAARANSFWEMAAGGSDDNARPAGKGGPRVNNFFRSIAYQLFANVVDYGARYRGMQRVALSEDTLEATADIVLDKDRHGTWHTPPHWIDSAFQLAGFVMNSFGVQGDGKISGSSRDFFYITPGWRHFRLLERLEPGPEATYRSFVRMFPVGSEPGAYSGDIYLHRGKRLVGVCAGIKFKAVPRALMPVLFPRIEPQAGKRRNQAQTAENRLVKGKGNCEYTHTVFQEPKSRTPAYDVTKSQPHAEHCDISISQKTQPVAAVPVTQPALPAKERGEQNQGQSQSQNAQATACLSLISDETGLDLDDLTGEAAFADLGVDSLMSLALSAKIRAELGIDVQSSIFLECPTVQDLVTWLSK.

An N-terminal acylcarrier protein transacylase domain (SAT) region spans residues 40–279 (IQDLIRRLHR…SRHSALPISG (240 aa)). Positions 416 to 838 (DAKLAVVGMA…GGNTTLLLED (423 aa)) constitute a Ketosynthase family 3 (KS3) domain. A disordered region spans residues 453–492 (PPDRFDLDAHFDPSGEKENTTTKGSQSNRPLSRQAEQTDP). The segment covering 455–472 (DRFDLDAHFDPSGEKENT) has biased composition (basic and acidic residues). Positions 473–492 (TTKGSQSNRPLSRQAEQTDP) are enriched in polar residues. Catalysis depends on for beta-ketoacyl synthase activity residues C577, H712, and H755. Residues 947–1282 (AFSGQGCLYH…QSFASLRRGD (336 aa)) form a malonyl-CoA:ACP transacylase (MAT) domain region. The disordered stretch occupies residues 1004–1027 (RCPHRESTPSSDASHDSNTNRTST). Over residues 1011-1027 (TPSSDASHDSNTNRTST) the composition is skewed to polar residues. The product template (PT) domain stretch occupies residues 1364 to 1704 (TSSVQQIIFE…PRALMPVLFP (341 aa)). The N-terminal hotdog fold stretch occupies residues 1368–1502 (QQIIFEEYDE…ATVCYEEAQD (135 aa)). The PKS/mFAS DH domain maps to 1368 to 1700 (QQIIFEEYDE…FKAVPRALMP (333 aa)). The active-site Proton acceptor; for dehydratase activity is the H1400. The segment at 1538 to 1700 (KGGPRVNNFF…FKAVPRALMP (163 aa)) is C-terminal hotdog fold. The active-site Proton donor; for dehydratase activity is the D1602. A Carrier domain is found at 1795–1870 (QSQNAQATAC…VQDLVTWLSK (76 aa)). S1832 is modified (O-(pantetheine 4'-phosphoryl)serine).

The cofactor is pantetheine 4'-phosphate.

The catalysed reaction is holo-[ACP] + 6 malonyl-CoA + acetyl-CoA + 6 H(+) = 3,5,7,9,11,13-hexaoxotetradecanoyl-[ACP] + 6 CO2 + 7 CoA. It carries out the reaction holo-[ACP] + 5 malonyl-CoA + acetyl-CoA + 5 H(+) = 3,5,7,9,11-pentaoxododecanoyl-[ACP] + 5 CO2 + 6 CoA. It participates in secondary metabolite biosynthesis. Non-reducing polyketide synthase; part of the pkg gene cluster that mediates the biosynthesis of dihydrocitreoisocoumarin and 6,8-dihydroxy-3-(2-oxopropyl)-isocoumarin. The non-reducing polyketide synthase pkgA performs the condensation of one acetyl-CoA starter unit with 6 and 5 malonyl-CoA units, respectively. As pkgA lacks a releasing domain, the thioesterase pkgB is necessary to break the thioester bond and release dihydrocitreoisocoumarin and 6,8-dihydroxy-3-(2-oxopropyl)-isocoumarin from pkgA. The protein is Non-reducing polyketide synthase pkgA of Emericella nidulans (strain FGSC A4 / ATCC 38163 / CBS 112.46 / NRRL 194 / M139) (Aspergillus nidulans).